The sequence spans 394 residues: N-acetylgalactosamine-6-phosphate deacetylase (394 aa).

Residue Glu137 coordinates Zn(2+). Residue 148-149 (CH) participates in substrate binding. Positions 201 and 222 each coordinate Zn(2+). Residues 225–226 (NG), Arg233, and 254–257 (DGQH) contribute to the substrate site. Asp280 (proton donor/acceptor) is an active-site residue. A substrate-binding site is contributed by 313–315 (LAG).

It belongs to the metallo-dependent hydrolases superfamily. NagA family.

The protein localises to the cytoplasm. The enzyme catalyses N-acetyl-D-galactosamine 6-phosphate + H2O = D-galactosamine 6-phosphate + acetate. It carries out the reaction N-acetyl-D-glucosamine 6-phosphate + H2O = D-glucosamine 6-phosphate + acetate. Functionally, involved in the pathway of N-acetyl-D-galactosamine degradation. Catalyzes the conversion of N-acetyl-D-galactosamine 6-phosphate to D-galactosamine 6-phosphate and acetate. It can also catalyze the conversion of N-acetyl-D-glucosamine 6-phosphate. This chain is N-acetylgalactosamine-6-phosphate deacetylase, found in Shewanella sp. (strain ANA-3).